Here is a 161-residue protein sequence, read N- to C-terminus: Type IV major fimbrial protein FimA (161 aa).

Positions 1 to 7 are cleaved as a propeptide — leader sequence; sequence MKSLQKG. Phe8 is subject to N-methylphenylalanine. A helical membrane pass occupies residues 8 to 28; that stretch reads FTLIELMIVVAIIGILAAFAI. The cysteines at positions 63 and 105 are disulfide-linked.

This sequence belongs to the N-Me-Phe pilin family. In terms of assembly, the pili are polar flexible filaments of about 5.4 nanometers diameter and 2.5 micrometers average length; they consist of only a single polypeptide chain arranged in a helical configuration of five subunits per turn in the assembled pilus.

It localises to the fimbrium. Its subcellular location is the membrane. Functionally, major component of the type IV fimbriae that plays an essential role in twitching motility, natural transformation, and protease secretion. This Dichelobacter nodosus (Bacteroides nodosus) protein is Type IV major fimbrial protein FimA (fimA).